The chain runs to 308 residues: UDP-N-acetylenolpyruvoylglucosamine reductase 2 (308 aa).

The FAD-binding PCMH-type domain occupies 31–197 (RIGGPADYLV…AEVVMALRPA (167 aa)). Arg-176 is an active-site residue. Residue Ser-226 is the Proton donor of the active site. The active site involves Glu-296.

This sequence belongs to the MurB family. FAD is required as a cofactor.

The protein localises to the cytoplasm. It carries out the reaction UDP-N-acetyl-alpha-D-muramate + NADP(+) = UDP-N-acetyl-3-O-(1-carboxyvinyl)-alpha-D-glucosamine + NADPH + H(+). Its pathway is cell wall biogenesis; peptidoglycan biosynthesis. Cell wall formation. The sequence is that of UDP-N-acetylenolpyruvoylglucosamine reductase 2 from Symbiobacterium thermophilum (strain DSM 24528 / JCM 14929 / IAM 14863 / T).